Here is a 162-residue protein sequence, read N- to C-terminus: Large ribosomal subunit protein bL17 (162 aa).

The segment at 118–162 is disordered; the sequence is RAPAAAPEAEEKGEKKAAGKAEKAPKAAKAPKAEKKPAKKAAKAE. Residues 126-162 are compositionally biased toward basic and acidic residues; it reads AEEKGEKKAAGKAEKAPKAAKAPKAEKKPAKKAAKAE.

This sequence belongs to the bacterial ribosomal protein bL17 family. In terms of assembly, part of the 50S ribosomal subunit. Contacts protein L32.

This Anaeromyxobacter dehalogenans (strain 2CP-C) protein is Large ribosomal subunit protein bL17.